The primary structure comprises 86 residues: MTDRYTIHSQLEHLQSKYIGTGHADTTKWEWLVNQHRDSYCSYMGHFDLLNYFAIAENESKARVRFNLMEKMLQPSGPPADKPEEN.

Position 2 is an N-acetylthreonine (T2). At S9 the chain carries Phosphoserine. An interaction with SF3B1 and SF3B3 region spans residues Q15–S76. The residue at position 17 (K17) is an N6-acetyllysine.

Belongs to the SF3B5 family. In terms of assembly, component of the 17S U2 SnRNP complex, a ribonucleoprotein complex that contains small nuclear RNA (snRNA) U2 and a number of specific proteins. Part of the SF3B subcomplex of the 17S U2 SnRNP complex. SF3B associates with the splicing subcomplex SF3A and a 12S RNA unit to form the U2 small nuclear ribonucleoproteins complex (U2 snRNP). Within the SF3B subcomplex, interacts directly with SF3B1 (via HEAT domain) and SF3B3. Component of the minor spliceosome, which splices U12-type introns.

The protein resides in the nucleus. In terms of biological role, component of the 17S U2 SnRNP complex of the spliceosome, a large ribonucleoprotein complex that removes introns from transcribed pre-mRNAs. The 17S U2 SnRNP complex (1) directly participates in early spliceosome assembly and (2) mediates recognition of the intron branch site during pre-mRNA splicing by promoting the selection of the pre-mRNA branch-site adenosine, the nucleophile for the first step of splicing. Within the 17S U2 SnRNP complex, SF3B4 is part of the SF3B subcomplex, which is required for 'A' complex assembly formed by the stable binding of U2 snRNP to the branchpoint sequence in pre-mRNA. Sequence independent binding of SF3A and SF3B subcomplexes upstream of the branch site is essential, it may anchor U2 snRNP to the pre-mRNA. Also acts as a component of the minor spliceosome, which is involved in the splicing of U12-type introns in pre-mRNAs. This is Splicing factor 3B subunit 5 (Sf3b5) from Mus musculus (Mouse).